Reading from the N-terminus, the 363-residue chain is Transcriptional regulator AacuR (363 aa).

The interval 1 to 24 is disordered; that stretch reads MTSLQCPPPDRTRRSLSPTGPKFR. A DNA-binding region (zn(2)-C6 fungal-type) is located at residues 27 to 54; it reads CKSCAASKIRCTKEKPQCARCVKRNMVC. Residues 63-72 show a composition bias toward basic residues; the sequence is RRKPGARLKH. The tract at residues 63–104 is disordered; it reads RRKPGARLKHRESITTNAHHSPTTTTITTSRTTSSSPSASPK. A compositionally biased stretch (low complexity) spans 76 to 102; sequence ITTNAHHSPTTTTITTSRTTSSSPSAS.

The protein resides in the nucleus. In terms of biological role, transcriptional regulator; part of the gene cluster that mediates the biosynthesis of the tetrahydroxanthone dimer secalonic acid D. This is Transcriptional regulator AacuR from Aspergillus aculeatus (strain ATCC 16872 / CBS 172.66 / WB 5094).